The sequence spans 349 residues: ATP synthase subunit a-2 (349 aa).

Residues 1 to 97 constitute a propeptide that is removed on maturation; it reads MERLTRLNHF…SNYMKLMEIP (97 aa). 7 helical membrane passes run 118-138, 184-204, 213-233, 240-260, 280-300, 303-323, and 326-346; these read FSFT…LLLI, FFPC…QGMI, HFLI…IVGF, FFSF…LVLL, MMAG…MLCM, IFYF…TGLE, and VAIL…NDAI.

The protein belongs to the ATPase A chain family. F-type ATPases have 2 components, CF(1) - the catalytic core - and CF(0) - the membrane proton channel. CF(1) has five subunits: alpha(3), beta(3), gamma(1), delta(1), epsilon(1). CF(0) has three main subunits: a, b and c.

It localises to the mitochondrion inner membrane. Functionally, mitochondrial membrane ATP synthase (F(1)F(0) ATP synthase or Complex V) produces ATP from ADP in the presence of a proton gradient across the membrane which is generated by electron transport complexes of the respiratory chain. F-type ATPases consist of two structural domains, F(1) - containing the extramembraneous catalytic core and F(0) - containing the membrane proton channel, linked together by a central stalk and a peripheral stalk. During catalysis, ATP synthesis in the catalytic domain of F(1) is coupled via a rotary mechanism of the central stalk subunits to proton translocation. Key component of the proton channel; it may play a direct role in the translocation of protons across the membrane. In Arabidopsis thaliana (Mouse-ear cress), this protein is ATP synthase subunit a-2 (ATP6-2).